The primary structure comprises 543 residues: Protein GPR108 (543 aa).

The signal sequence occupies residues 1-32 (MAVSERRGLGRGSPAEWGQRLLLVLLLGGCSG). Residues Asn57 and Asn109 are each glycosylated (N-linked (GlcNAc...) asparagine). Residues 149–186 (SKPGLPKPQATVPRKVDGGGTSAASKPKSTPAVIQGPS) are disordered. N-linked (GlcNAc...) asparagine glycosylation is found at Asn200, Asn204, and Asn228. 7 consecutive transmembrane segments (helical) span residues 263–283 (LYMV…SILC), 292–312 (IHWL…FHSI), 336–356 (LLKG…WAFI), 367–387 (VFGI…IIES), 401–421 (ILFL…VWSI), 449–469 (VMVI…QVAV), and 473–493 (WQWL…VLTG). Asn534 carries an N-linked (GlcNAc...) asparagine glycan.

Belongs to the LU7TM family.

The protein localises to the golgi apparatus. It localises to the cis-Golgi network membrane. It is found in the trans-Golgi network membrane. The protein resides in the golgi apparatus membrane. Functionally, may play a role in intracellular immune modulation by activating NF-kappaB response and attenuating Toll-like-receptor response. Its function is as follows. (Microbial infection) Plays an essential function in adeno-associated virus (AAV) transduction across multiple serotypes except AAV5. May play a critical role in mediating the endosomal virus escape or in the AAV virions trafficking from endosomes to the nucleus. This Homo sapiens (Human) protein is Protein GPR108.